A 144-amino-acid polypeptide reads, in one-letter code: Large ribosomal subunit protein uL13 (144 aa).

This sequence belongs to the universal ribosomal protein uL13 family. Part of the 50S ribosomal subunit.

This protein is one of the early assembly proteins of the 50S ribosomal subunit, although it is not seen to bind rRNA by itself. It is important during the early stages of 50S assembly. The polypeptide is Large ribosomal subunit protein uL13 (Syntrophomonas wolfei subsp. wolfei (strain DSM 2245B / Goettingen)).